A 327-amino-acid polypeptide reads, in one-letter code: Eukaryotic translation initiation factor 3 subunit I (327 aa).

6 WD repeats span residues 8–49, 51–91, 144–183, 188–227, 229–268, and 285–324; these read GHDR…GTYD, HNGV…NSVS, SLQT…DIVN, AHKF…CLKT, KAER…GHFE, and GHFG…LKFD.

The protein belongs to the eIF-3 subunit I family. As to quaternary structure, component of the eukaryotic translation initiation factor 3 (eIF-3) complex.

It is found in the cytoplasm. In terms of biological role, component of the eukaryotic translation initiation factor 3 (eIF-3) complex, which is involved in protein synthesis of a specialized repertoire of mRNAs and, together with other initiation factors, stimulates binding of mRNA and methionyl-tRNAi to the 40S ribosome. The eIF-3 complex specifically targets and initiates translation of a subset of mRNAs involved in cell proliferation. The polypeptide is Eukaryotic translation initiation factor 3 subunit I (Brugia malayi (Filarial nematode worm)).